The sequence spans 372 residues: NAD(P)H-quinone oxidoreductase subunit 1 (372 aa).

8 consecutive transmembrane segments (helical) span residues 27–47, 97–117, 128–148, 176–196, 204–224, 266–286, 308–328, and 347–367; these read IIWL…GVLV, ILFT…WLIV, VGIG…GLLM, LALS…IDIV, ILSW…ICAL, ILSA…PIPV, SIGI…AILL, and FLLP…LAFP.

Belongs to the complex I subunit 1 family. NDH-1 is composed of at least 11 different subunits.

Its subcellular location is the cellular thylakoid membrane. It carries out the reaction a plastoquinone + NADH + (n+1) H(+)(in) = a plastoquinol + NAD(+) + n H(+)(out). The catalysed reaction is a plastoquinone + NADPH + (n+1) H(+)(in) = a plastoquinol + NADP(+) + n H(+)(out). In terms of biological role, NDH-1 shuttles electrons from an unknown electron donor, via FMN and iron-sulfur (Fe-S) centers, to quinones in the respiratory and/or the photosynthetic chain. The immediate electron acceptor for the enzyme in this species is believed to be plastoquinone. Couples the redox reaction to proton translocation, and thus conserves the redox energy in a proton gradient. This is NAD(P)H-quinone oxidoreductase subunit 1 from Prochlorococcus marinus (strain MIT 9301).